Consider the following 259-residue polypeptide: Phosphatidylglycerol--prolipoprotein diacylglyceryl transferase (259 aa).

Transmembrane regions (helical) follow at residues 10 to 30 (IGLL…LFAY), 50 to 70 (IISW…ILFY), 86 to 106 (WKGG…MYIF), and 112 to 132 (IKFL…IFLG). Arg-133 lines the a 1,2-diacyl-sn-glycero-3-phospho-(1'-sn-glycerol) pocket. A run of 3 helical transmembrane segments spans residues 169-189 (LYEA…LFFF), 197-217 (GMLF…IEFV), and 227-247 (ILFN…ILGI).

This sequence belongs to the Lgt family.

It localises to the cell inner membrane. The enzyme catalyses L-cysteinyl-[prolipoprotein] + a 1,2-diacyl-sn-glycero-3-phospho-(1'-sn-glycerol) = an S-1,2-diacyl-sn-glyceryl-L-cysteinyl-[prolipoprotein] + sn-glycerol 1-phosphate + H(+). It participates in protein modification; lipoprotein biosynthesis (diacylglyceryl transfer). Functionally, catalyzes the transfer of the diacylglyceryl group from phosphatidylglycerol to the sulfhydryl group of the N-terminal cysteine of a prolipoprotein, the first step in the formation of mature lipoproteins. The chain is Phosphatidylglycerol--prolipoprotein diacylglyceryl transferase from Ehrlichia ruminantium (strain Gardel).